A 369-amino-acid chain; its full sequence is Uroporphyrinogen decarboxylase (369 aa).

Residues 28-32, D78, Y154, S209, and H339 contribute to the substrate site; that span reads RQAGR.

This sequence belongs to the uroporphyrinogen decarboxylase family. Homodimer.

The protein localises to the cytoplasm. It carries out the reaction uroporphyrinogen III + 4 H(+) = coproporphyrinogen III + 4 CO2. It participates in porphyrin-containing compound metabolism; protoporphyrin-IX biosynthesis; coproporphyrinogen-III from 5-aminolevulinate: step 4/4. Functionally, catalyzes the decarboxylation of four acetate groups of uroporphyrinogen-III to yield coproporphyrinogen-III. This is Uroporphyrinogen decarboxylase from Polaromonas naphthalenivorans (strain CJ2).